The chain runs to 341 residues: UDP-N-acetylenolpyruvoylglucosamine reductase (341 aa).

Residues 15 to 185 (VEQSCLSLIE…TAVGLRLPKA (171 aa)) enclose the FAD-binding PCMH-type domain. The active site involves arginine 161. Serine 231 acts as the Proton donor in catalysis. Glutamate 327 is an active-site residue.

The protein belongs to the MurB family. FAD is required as a cofactor.

It localises to the cytoplasm. The enzyme catalyses UDP-N-acetyl-alpha-D-muramate + NADP(+) = UDP-N-acetyl-3-O-(1-carboxyvinyl)-alpha-D-glucosamine + NADPH + H(+). It functions in the pathway cell wall biogenesis; peptidoglycan biosynthesis. Functionally, cell wall formation. The polypeptide is UDP-N-acetylenolpyruvoylglucosamine reductase (Shewanella sp. (strain ANA-3)).